We begin with the raw amino-acid sequence, 601 residues long: Glutathione-regulated potassium-efflux system protein KefB (601 aa).

A run of 13 helical transmembrane segments spans residues 4–24 (SDFL…VPLA), 29–49 (IGAV…GLGF), 55–75 (EILH…GLEL), 87–107 (IFGV…GLLM), 115–135 (AAVV…LQLM), 152–172 (VLLF…LLAG), 177–197 (HFDW…LIGG), 207–227 (FIAA…LVLG), 230–250 (LFMD…GVLL), 268–288 (GLLL…GVLY), 291–311 (LLWV…VLYL), 324–344 (MQFA…FSTA), and 356–376 (ALLL…MKLV). The RCK N-terminal domain occupies 400-519 (KPQVIVVGFG…AGVTQFSRET (120 aa)).

This sequence belongs to the monovalent cation:proton antiporter 2 (CPA2) transporter (TC 2.A.37) family. KefB subfamily. Interacts with the regulatory subunit KefG.

It localises to the cell inner membrane. Functionally, pore-forming subunit of a potassium efflux system that confers protection against electrophiles. Catalyzes K(+)/H(+) antiport. The protein is Glutathione-regulated potassium-efflux system protein KefB of Shigella sonnei (strain Ss046).